A 786-amino-acid chain; its full sequence is Endonuclease MutS2 (786 aa).

335–342 (GPNTGGKT) lines the ATP pocket. Positions 711–786 (LDLRGERFEN…GLGVTVVELK (76 aa)) constitute a Smr domain.

This sequence belongs to the DNA mismatch repair MutS family. MutS2 subfamily. In terms of assembly, homodimer. Binds to stalled ribosomes, contacting rRNA.

In terms of biological role, endonuclease that is involved in the suppression of homologous recombination and thus may have a key role in the control of bacterial genetic diversity. Acts as a ribosome collision sensor, splitting the ribosome into its 2 subunits. Detects stalled/collided 70S ribosomes which it binds and splits by an ATP-hydrolysis driven conformational change. Acts upstream of the ribosome quality control system (RQC), a ribosome-associated complex that mediates the extraction of incompletely synthesized nascent chains from stalled ribosomes and their subsequent degradation. Probably generates substrates for RQC. The chain is Endonuclease MutS2 from Bacillus cereus (strain Q1).